The primary structure comprises 166 residues: Protein C (166 aa).

A disordered region spans residues 17-42 (YKRHTDDQASNNQVPKTGQEHGRTSC).

In terms of biological role, may counteract the cellular interferon antiviral system. The polypeptide is Protein C (P/V/C) (Hendra virus (isolate Horse/Autralia/Hendra/1994)).